The following is a 762-amino-acid chain: 5-methyltetrahydropteroyltriglutamate--homocysteine methyltransferase (762 aa).

5-methyltetrahydropteroyltri-L-glutamate contacts are provided by residues 18 to 21 (REWK) and Lys112. L-homocysteine-binding positions include 435–437 (IGS) and Glu488. Residues 435-437 (IGS) and Glu488 each bind L-methionine. 5-methyltetrahydropteroyltri-L-glutamate contacts are provided by residues 519-520 (RC) and Trp565. Asp603 is an L-homocysteine binding site. Asp603 lines the L-methionine pocket. 5-methyltetrahydropteroyltri-L-glutamate is bound at residue Glu609. Zn(2+)-binding residues include His645, Cys647, and Glu669. The active-site Proton donor is the His698. Zn(2+) is bound at residue Cys730.

This sequence belongs to the vitamin-B12 independent methionine synthase family. The cofactor is Zn(2+).

The catalysed reaction is 5-methyltetrahydropteroyltri-L-glutamate + L-homocysteine = tetrahydropteroyltri-L-glutamate + L-methionine. It functions in the pathway amino-acid biosynthesis; L-methionine biosynthesis via de novo pathway; L-methionine from L-homocysteine (MetE route): step 1/1. Its function is as follows. Catalyzes the transfer of a methyl group from 5-methyltetrahydrofolate to homocysteine resulting in methionine formation. In Bacillus licheniformis (strain ATCC 14580 / DSM 13 / JCM 2505 / CCUG 7422 / NBRC 12200 / NCIMB 9375 / NCTC 10341 / NRRL NRS-1264 / Gibson 46), this protein is 5-methyltetrahydropteroyltriglutamate--homocysteine methyltransferase.